Here is a 204-residue protein sequence, read N- to C-terminus: Lysozyme g (204 aa).

The N-terminal stretch at 1-19 (MHLMLVLLGLAALLGTSQS) is a signal peptide. 2 cysteine pairs are disulfide-bonded: cysteine 23–cysteine 79 and cysteine 37–cysteine 48. Catalysis depends on residues glutamate 92 and aspartate 105.

Belongs to the glycosyl hydrolase 23 family.

It is found in the secreted. It carries out the reaction Hydrolysis of (1-&gt;4)-beta-linkages between N-acetylmuramic acid and N-acetyl-D-glucosamine residues in a peptidoglycan and between N-acetyl-D-glucosamine residues in chitodextrins.. In terms of biological role, has bacteriolytic activity against M.luteus. The polypeptide is Lysozyme g (Struthio camelus (Common ostrich)).